The chain runs to 78 residues: uncharacterized protein (78 aa).

The next 2 membrane-spanning stretches (helical) occupy residues 5-24 (LALL…IKLM) and 39-61 (LWLQ…AGFI).

The protein localises to the cell membrane. This is an uncharacterized protein from Bacillus subtilis (strain 168).